Consider the following 248-residue polypeptide: Large ribosomal subunit protein uL4 (248 aa).

Residues 44–109 (QDTGTDEYAG…LDINTKERKL (66 aa)) form a disordered region. A compositionally biased stretch (basic and acidic residues) spans 92-109 (PKAEKDRGLDINTKERKL).

This sequence belongs to the universal ribosomal protein uL4 family. In terms of assembly, part of the 50S ribosomal subunit.

Functionally, one of the primary rRNA binding proteins, this protein initially binds near the 5'-end of the 23S rRNA. It is important during the early stages of 50S assembly. It makes multiple contacts with different domains of the 23S rRNA in the assembled 50S subunit and ribosome. In terms of biological role, forms part of the polypeptide exit tunnel. In Natronomonas pharaonis (strain ATCC 35678 / DSM 2160 / CIP 103997 / JCM 8858 / NBRC 14720 / NCIMB 2260 / Gabara) (Halobacterium pharaonis), this protein is Large ribosomal subunit protein uL4.